Consider the following 172-residue polypeptide: Myosin regulatory light chain 12B (172 aa).

The segment covering 1–16 (MSSKKAKTKTTKKRPQ) has biased composition (basic residues). Residues 1–20 (MSSKKAKTKTTKKRPQRATS) form a disordered region. Position 19 is a phosphothreonine; by MLCK and ZIPK/DAPK3 (Thr-19). Ser-20 is subject to Phosphoserine; by MLCK and ZIPK/DAPK3. EF-hand domains lie at 29-64 (SQIQ…LGKN), 98-133 (DPED…MGDR), and 134-169 (FTDE…GAKD). Asp-42, Asn-44, Asp-46, and Asp-53 together coordinate Ca(2+).

As to quaternary structure, myosin is a hexamer of 2 heavy chains and 4 light chains: interacts with myosin heavy chain MYO19. Phosphorylation increases the actin-activated myosin ATPase activity and thereby regulates the contractile activity. It is required to generate the driving force in the migration of the cells but not necessary for localization of myosin-2 at the leading edge. Phosphorylation is reduced following epigallocatechin-3-O-gallate treatment.

In terms of biological role, myosin regulatory subunit that plays an important role in regulation of both smooth muscle and nonmuscle cell contractile activity via its phosphorylation. Phosphorylation triggers actin polymerization in vascular smooth muscle. Implicated in cytokinesis, receptor capping, and cell locomotion. The polypeptide is Myosin regulatory light chain 12B (Myl12b) (Rattus norvegicus (Rat)).